The chain runs to 608 residues: Amino-acid acetyltransferase, mitochondrial (608 aa).

Residues 402 to 604 enclose the N-acetyltransferase domain; the sequence is LNLITEHEKG…DICTRIEPSL (203 aa).

Belongs to the acetyltransferase family.

It localises to the mitochondrion. The catalysed reaction is L-glutamate + acetyl-CoA = N-acetyl-L-glutamate + CoA + H(+). It functions in the pathway amino-acid biosynthesis; L-arginine biosynthesis; N(2)-acetyl-L-ornithine from L-glutamate: step 1/4. N-acetylglutamate synthase involved in arginine biosynthesis. The sequence is that of Amino-acid acetyltransferase, mitochondrial (ARG2) from Yarrowia lipolytica (strain CLIB 122 / E 150) (Yeast).